Reading from the N-terminus, the 352-residue chain is [Citrate [pro-3S]-lyase] ligase (352 aa).

The 128-residue stretch at methionine 1 to threonine 128 folds into the N-acetyltransferase domain.

It catalyses the reaction holo-[citrate lyase ACP] + acetate + ATP = acetyl-[citrate lyase ACP] + AMP + diphosphate. Functionally, acetylation of prosthetic group (2-(5''-phosphoribosyl)-3'-dephosphocoenzyme-A) of the gamma subunit of citrate lyase. This chain is [Citrate [pro-3S]-lyase] ligase (citC), found in Escherichia coli (strain K12).